Reading from the N-terminus, the 248-residue chain is 1-(5-phosphoribosyl)-5-[(5-phosphoribosylamino)methylideneamino] imidazole-4-carboxamide isomerase (248 aa).

Asp-7 serves as the catalytic Proton acceptor. The active-site Proton donor is the Asp-131.

Belongs to the HisA/HisF family.

The protein localises to the cytoplasm. It catalyses the reaction 1-(5-phospho-beta-D-ribosyl)-5-[(5-phospho-beta-D-ribosylamino)methylideneamino]imidazole-4-carboxamide = 5-[(5-phospho-1-deoxy-D-ribulos-1-ylimino)methylamino]-1-(5-phospho-beta-D-ribosyl)imidazole-4-carboxamide. Its pathway is amino-acid biosynthesis; L-histidine biosynthesis; L-histidine from 5-phospho-alpha-D-ribose 1-diphosphate: step 4/9. In Baumannia cicadellinicola subsp. Homalodisca coagulata, this protein is 1-(5-phosphoribosyl)-5-[(5-phosphoribosylamino)methylideneamino] imidazole-4-carboxamide isomerase.